The following is a 442-amino-acid chain: Probable D-serine dehydratase (442 aa).

K111 is subject to N6-(pyridoxal phosphate)lysine.

The protein belongs to the serine/threonine dehydratase family. DsdA subfamily. Pyridoxal 5'-phosphate is required as a cofactor.

The enzyme catalyses D-serine = pyruvate + NH4(+). The protein is Probable D-serine dehydratase of Sinorhizobium medicae (strain WSM419) (Ensifer medicae).